The chain runs to 233 residues: Large ribosomal subunit protein uL1 (233 aa).

It belongs to the universal ribosomal protein uL1 family. As to quaternary structure, part of the 50S ribosomal subunit.

In terms of biological role, binds directly to 23S rRNA. The L1 stalk is quite mobile in the ribosome, and is involved in E site tRNA release. Functionally, protein L1 is also a translational repressor protein, it controls the translation of the L11 operon by binding to its mRNA. The sequence is that of Large ribosomal subunit protein uL1 from Photobacterium profundum (strain SS9).